We begin with the raw amino-acid sequence, 150 residues long: Small ribosomal subunit protein uS7cz/uS7cy (150 aa).

Belongs to the universal ribosomal protein uS7 family. As to quaternary structure, part of the 30S ribosomal subunit.

The protein localises to the plastid. It localises to the chloroplast. Functionally, one of the primary rRNA binding proteins, it binds directly to 16S rRNA where it nucleates assembly of the head domain of the 30S subunit. This chain is Small ribosomal subunit protein uS7cz/uS7cy (rps7-A), found in Adiantum capillus-veneris (Maidenhair fern).